The primary structure comprises 143 residues: MKINLIAVGKLEKEYLNLYLSYLKKISFFATINLIEIKEINEKNIDLKKQKETELIIEKIPKNSKVYLCSLQGQEKTSEDFSLLFNEDNLTFVIGGSNGVDESTFLHKISFSKNTFPHQLFRILLVEQIYRSFTILKGIKYHK.

Residues leucine 68 and glycine 95 each coordinate S-adenosyl-L-methionine.

It belongs to the RNA methyltransferase RlmH family. In terms of assembly, homodimer.

It localises to the cytoplasm. The catalysed reaction is pseudouridine(1915) in 23S rRNA + S-adenosyl-L-methionine = N(3)-methylpseudouridine(1915) in 23S rRNA + S-adenosyl-L-homocysteine + H(+). Specifically methylates the pseudouridine at position 1915 (m3Psi1915) in 23S rRNA. This is Ribosomal RNA large subunit methyltransferase H from Mycoplasma mobile (strain ATCC 43663 / 163K / NCTC 11711) (Mesomycoplasma mobile).